The chain runs to 118 residues: MTPLLTLFLVVLMGLPLAPVQALDCHVCAYNGDNCFNPMRCPAMVAYCMTTRTYYTPTRMKVSKSCVPSCFETVYDGYSKHASTTSCCQYDLCNSAGLAIPATLALAPVLLATLWGLL.

An N-terminal signal peptide occupies residues 1–22 (MTPLLTLFLVVLMGLPLAPVQA). The UPAR/Ly6 domain occupies 23-107 (LDCHVCAYNG…LAIPATLALA (85 aa)). 5 disulfide bridges follow: cysteine 25–cysteine 48, cysteine 28–cysteine 35, cysteine 41–cysteine 66, cysteine 70–cysteine 87, and cysteine 88–cysteine 93. Serine 95 is lipidated: GPI-anchor amidated serine. Positions 96–118 (AGLAIPATLALAPVLLATLWGLL) are cleaved as a propeptide — removed in mature form.

In terms of assembly, interacts with nAChRs containing alpha-4:beta-2 (CHRNA4:CHRNB2) and alpha-7 (CHRNA7) subunits. Interacts with CHRNA4 probably in the endoplasmic reticulum prior to nAChR pentameric assembly. Interacts with KCNA2/Potassium voltage-gated channel subfamily A member 2. As to expression, expressed in lung predominantly in airway epithelial cells, submucous glands, and smooth muscle cells, in endothelial and smooth muscle cells in vessel walls and in alveolar type II cells (at protein level). Also expressed in brain.

The protein resides in the cell membrane. The protein localises to the cell projection. It localises to the dendrite. Its subcellular location is the endoplasmic reticulum. In terms of biological role, acts in different tissues through interaction to nicotinic acetylcholine receptors (nAChRs). The proposed role as modulator of nAChR activity seems to be dependent on the nAChR subtype and stoichiometry, and to involve an effect on nAChR trafficking and its cell surface expression, and on single channel properties of the nAChR inserted in the plasma membrane. Modulates functional properties of nicotinic acetylcholine receptors (nAChRs) to prevent excessive excitation, and hence neurodegeneration. Enhances desensitization by increasing both the rate and extent of desensitization of alpha-4:beta-2-containing nAChRs and slowing recovery from desensitization. Promotes large amplitude ACh-evoked currents through alpha-4:beta-2 nAChRs. Is involved in regulation of the nAChR pentameric assembly in the endoplasmic reticulum. Shifts stoichiometry from high sensitivity alpha-4(2):beta-2(3) to low sensitivity alpha-4(3):beta-2(2) nAChR. In vitro modulates alpha-3:beta-4-containing nAChRs. Reduces cell surface expression of (alpha-3:beta-4)(2):beta-4 and (alpha-3:beta-4)(2):alpha-5 nAChRs suggesting an interaction with nAChR alpha-3(-):(+)beta-4 subunit interfaces and an allosteric mode. Corresponding single channel effects characterized by decreased unitary conductance, altered burst proportions and enhanced desensitization/inactivation seem to depend on nAChR alpha:alpha subunit interfaces and are greater in (alpha-3:beta-2)(2):alpha-3 when compared to (alpha-3:beta-2)(2):alpha-5 nAChRs. Prevents plasticity in the primary visual cortex late in life. In Macaca mulatta (Rhesus macaque), this protein is Ly-6/neurotoxin-like protein 1.